We begin with the raw amino-acid sequence, 399 residues long: MAAPQNYLAVIKVIGVGGGGVNAINRMIEVGLKGVEFIAINTDAQALLMSDADVKLDVGRELTRGLGAGANPAVGRKAAEDHREEIEEVLKGADMVFVTAGEGGGTGTGGAPVVANIARSLGALTIGVVTRPFTFEGRRRANQAEDGIAELREEVDTLIVIPNDRLLSISDRQVSVLDAFKSADQVLLSGVQGITDLITTPGLINLDFADVKSVMSEAGSALMGIGSARGDDRAVAAAEMAISSPLLEASIDGARGVLLSISGGSDLGLFEINEAAQLVSEAAHPEANIIFGAVIDDALGDEVRVTVIAAGFDGGQPPSKRDNVLGSSSAKREEPTPARPSESRPSFGSLGSVKPKEEPEPAPVPEPVADLPVSPPPVPPSRTYSDSAAEELDVPDFLK.

Residues 18 to 22 (GGGVN), 105 to 107 (GTG), Glu136, Arg140, and Asp184 contribute to the GTP site. The segment at 311–399 (GFDGGQPPSK…EELDVPDFLK (89 aa)) is disordered. The segment covering 388–399 (AAEELDVPDFLK) has biased composition (acidic residues).

It belongs to the FtsZ family. Homodimer. Polymerizes to form a dynamic ring structure in a strictly GTP-dependent manner. Interacts directly with several other division proteins.

It is found in the cytoplasm. Its function is as follows. Essential cell division protein that forms a contractile ring structure (Z ring) at the future cell division site. The regulation of the ring assembly controls the timing and the location of cell division. One of the functions of the FtsZ ring is to recruit other cell division proteins to the septum to produce a new cell wall between the dividing cells. Binds GTP and shows GTPase activity. This chain is Cell division protein FtsZ, found in Streptomyces coelicolor (strain ATCC BAA-471 / A3(2) / M145).